A 297-amino-acid chain; its full sequence is MANVVNMNSLLNGKDSRWLQLEVCREFQRNKCSRQDTECKFAHPPANVEVQNGKVTACYDSIKGRCNRDKPPCKYFHPPQHLKDQLLINGRNHLALKNALMQQMGIAPGQPVISGQVPAVATNPYLTGIPANSYSPYYTTGHLVPALLGPDPVTSQLGPVVPQTVQVAQQKIPRSDRLETSPLAAHHHQQQQQLQHQLNNINNNNNHSTAGAAATSTTATTTTNNAAAAAAAAAAAAAAAVMGHHTLEVGKKRAADTTDMFPLVFFCSFPSPCVFAFLNCSIFGFLRLWFSLFNLRH.

2 C3H1-type zinc fingers span residues 18–46 (WLQLEVCREFQRNKCSRQDTECKFAHPPA) and 52–80 (NGKVTACYDSIKGRCNRDKPPCKYFHPPQ).

It belongs to the muscleblind family. In terms of tissue distribution, expressed in embryonic muscle cells.

Its subcellular location is the nucleus. In terms of biological role, required for terminal differentiation of photoreceptor cells. Vital for embryonic development. The polypeptide is Protein muscleblind (mbl) (Drosophila melanogaster (Fruit fly)).